A 93-amino-acid chain; its full sequence is Small ribosomal subunit protein uS19 (93 aa).

It belongs to the universal ribosomal protein uS19 family.

Functionally, protein S19 forms a complex with S13 that binds strongly to the 16S ribosomal RNA. This chain is Small ribosomal subunit protein uS19, found in Leuconostoc citreum (strain KM20).